The following is a 128-amino-acid chain: Small ribosomal subunit protein bS6 (128 aa).

The protein belongs to the bacterial ribosomal protein bS6 family.

Its function is as follows. Binds together with bS18 to 16S ribosomal RNA. The polypeptide is Small ribosomal subunit protein bS6 (rpsF) (Thermotoga maritima (strain ATCC 43589 / DSM 3109 / JCM 10099 / NBRC 100826 / MSB8)).